A 1426-amino-acid chain; its full sequence is Homeobox protein cut-like 2 (1426 aa).

Positions 77–104 are disordered; sequence PEPPSAREQNEGTCPTGHTPANGNHLPG. Serine 81 bears the Phosphoserine mark. The stretch at 131–311 forms a coiled coil; sequence ITLAARLGEA…IKTELSILRA (181 aa). 6 disordered regions span residues 351-419, 460-488, 599-628, 653-676, 743-769, and 904-977; these read ALLA…FPSL, KPPS…GPEE, EIES…STSE, ESGP…TASQ, YASV…PRGD, and LGQG…SSSQ. Over residues 374–395 the composition is skewed to pro residues; that stretch reads PPYPPQLPPPPGPEDPLSPSPA. 2 stretches are compositionally biased toward low complexity: residues 397 to 408 and 460 to 470; these read PLLGPSLGPDGP and KPPSAPAASVP. A DNA-binding region (CUT 1) is located at residues 482–569; sequence DGAGPEEEQL…VLALRTIQVR (88 aa). Residues 587–655 adopt a coiled-coil conformation; sequence DAIKSILEQA…QQALLEMESG (69 aa). The span at 608–628 shows a compositional bias: polar residues; that stretch reads SKNSPASVSIPNGTASSSTSE. Composition is skewed to low complexity over residues 743–757, 910–928, and 965–976; these read YASV…SSYS, QAPT…EPTS, and SSSLGGKPFSSS. A DNA-binding region (CUT 2) is located at residues 828 to 915; that stretch reads QYELYMYREV…QGQGQAPTQQ (88 aa). The CUT 3 DNA-binding region spans 983-1070; sequence QEMVAMSPEL…VEKLRDMKKL (88 aa). Residues 1113 to 1172 constitute a DNA-binding region (homeobox); the sequence is AKKPRVVLAPAEKEALRKAYQLEPYPSQQTIELLSFQLNLKTNTVINWFHNYRSRMRREM. The tract at residues 1177-1392 is disordered; the sequence is TQDDPDFDPS…AALHPSTKVN (216 aa). 2 stretches are compositionally biased toward basic and acidic residues: residues 1233–1245 and 1260–1274; these read APDR…KQEE and DPDR…EHTH. Residues 1318-1332 are compositionally biased toward low complexity; it reads LSFKSTSESSCCSLE. Over residues 1338–1350 the composition is skewed to polar residues; that stretch reads PSVISSPDLTTCV. Residues 1351–1364 are compositionally biased toward low complexity; the sequence is SPAPSSSAPISPSL.

It belongs to the CUT homeobox family. As to expression, restricted to neural tissues. Expressed exclusively in the central and peripheral nervous systems.

It localises to the nucleus. Transcription factor involved in the control of neuronal proliferation and differentiation in the brain. Regulates dendrite development and branching, dendritic spine formation, and synaptogenesis in cortical layers II-III. Binds to DNA in a sequence-specific manner. The chain is Homeobox protein cut-like 2 (Cux2) from Mus musculus (Mouse).